The primary structure comprises 75 residues: UPF0154 protein MYPE400 (75 aa).

Residues 5–27 (IGLCLGLGIPISLIIGAVIGYYF) form a helical membrane-spanning segment.

This sequence belongs to the UPF0154 family.

It localises to the membrane. The polypeptide is UPF0154 protein MYPE400 (Malacoplasma penetrans (strain HF-2) (Mycoplasma penetrans)).